The following is an 802-amino-acid chain: Aldehyde dehydrogenase family 16 member A1 (802 aa).

This sequence belongs to the aldehyde dehydrogenase family. As to quaternary structure, interacts with SPG21.

This is Aldehyde dehydrogenase family 16 member A1 (Aldh16a1) from Mus musculus (Mouse).